The primary structure comprises 89 residues: Defensin-like protein 250 (89 aa).

The N-terminal stretch at 1–23 (MKLAAIFLVSCVLLSLLPSLTIA) is a signal peptide. Intrachain disulfides connect C29–C86, C40–C69, C48–C79, and C67–C81.

The protein belongs to the DEFL family.

It is found in the secreted. The sequence is that of Defensin-like protein 250 (SCRL8) from Arabidopsis thaliana (Mouse-ear cress).